The primary structure comprises 352 residues: Palmitoyltransferase PFA5 (352 aa).

Transmembrane regions (helical) follow at residues 12 to 32 (YWTIYIVPLVVLLLMIYGTWA) and 53 to 73 (IGLICTCCVLDALIIAIWVLI). In terms of domain architecture, DHHC spans 114-164 (VWCSNCQSLKVGRTKHSSHQGHCVPRFDHYCVWLGAVIGFKNYRLFVQFVF). Cys144 (S-palmitoyl cysteine intermediate) is an active-site residue. A run of 2 helical transmembrane segments spans residues 159–179 (FVQFVFYFAVLLMIVWITISV) and 195–215 (LIVLLIISGIGWLMTSGLFVS).

The protein belongs to the DHHC palmitoyltransferase family. PFA5 subfamily.

It is found in the membrane. The enzyme catalyses L-cysteinyl-[protein] + hexadecanoyl-CoA = S-hexadecanoyl-L-cysteinyl-[protein] + CoA. The sequence is that of Palmitoyltransferase PFA5 (PFA5) from Candida glabrata (strain ATCC 2001 / BCRC 20586 / JCM 3761 / NBRC 0622 / NRRL Y-65 / CBS 138) (Yeast).